Consider the following 389-residue polypeptide: Lipid-A-disaccharide synthase (389 aa).

This sequence belongs to the LpxB family.

It carries out the reaction a lipid X + a UDP-2-N,3-O-bis[(3R)-3-hydroxyacyl]-alpha-D-glucosamine = a lipid A disaccharide + UDP + H(+). Its pathway is bacterial outer membrane biogenesis; LPS lipid A biosynthesis. Its function is as follows. Condensation of UDP-2,3-diacylglucosamine and 2,3-diacylglucosamine-1-phosphate to form lipid A disaccharide, a precursor of lipid A, a phosphorylated glycolipid that anchors the lipopolysaccharide to the outer membrane of the cell. This chain is Lipid-A-disaccharide synthase, found in Burkholderia cenocepacia (strain HI2424).